The chain runs to 240 residues: tRNA (guanine-N(7)-)-methyltransferase (240 aa).

S-adenosyl-L-methionine-binding residues include Glu-70, Glu-95, Asp-122, and Asp-145. Asp-145 is an active-site residue. Substrate-binding positions include Lys-149, Asp-181, and 218–221 (TKFE).

It belongs to the class I-like SAM-binding methyltransferase superfamily. TrmB family.

The catalysed reaction is guanosine(46) in tRNA + S-adenosyl-L-methionine = N(7)-methylguanosine(46) in tRNA + S-adenosyl-L-homocysteine. It functions in the pathway tRNA modification; N(7)-methylguanine-tRNA biosynthesis. Its function is as follows. Catalyzes the formation of N(7)-methylguanine at position 46 (m7G46) in tRNA. The sequence is that of tRNA (guanine-N(7)-)-methyltransferase from Pseudomonas entomophila (strain L48).